Consider the following 520-residue polypeptide: Bile acid--coenzyme A ligase (520 aa).

This sequence belongs to the ATP-dependent AMP-binding enzyme family. Homodimer. Mg(2+) is required as a cofactor.

The catalysed reaction is cholate + ATP + CoA = choloyl-CoA + AMP + diphosphate. It catalyses the reaction deoxycholate + ATP + CoA = deoxycholoyl-CoA + AMP + diphosphate. The enzyme catalyses chenodeoxycholate + ATP + CoA = chenodeoxycholoyl-CoA + AMP + diphosphate. It participates in lipid metabolism; bile acid biosynthesis. Its activity is regulated as follows. Inhibited by diphosphate. In terms of biological role, functions in the bile acid 7alpha-dehydroxylation pathway, which forms secondary bile acids via the 7alpha-dehydroxylation of primary bile acids, and is carried out by intestinal anaerobic bacteria. Catalyzes the initial step in this pathway, i.e. the ATP-dependent thioesterification of primary bile acids with coenzyme A. Is active with C-24 bile acids with free carboxyl groups such as cholate, deoxycholate and chenodeoxycholate. Produces AMP and pyrophosphate in addition to the bile acid-CoA thioester. The protein is Bile acid--coenzyme A ligase of Clostridium scindens (strain JCM 10418 / VPI 12708).